The chain runs to 258 residues: 5'-nucleotidase SurE (258 aa).

The a divalent metal cation site is built by D16, D17, S47, and N99.

The protein belongs to the SurE nucleotidase family. Requires a divalent metal cation as cofactor.

Its subcellular location is the cytoplasm. The catalysed reaction is a ribonucleoside 5'-phosphate + H2O = a ribonucleoside + phosphate. In terms of biological role, nucleotidase that shows phosphatase activity on nucleoside 5'-monophosphates. This Coxiella burnetii (strain CbuK_Q154) (Coxiella burnetii (strain Q154)) protein is 5'-nucleotidase SurE.